Consider the following 413-residue polypeptide: Oxidoreductase vrtI (413 aa).

One can recognise a Fe2OG dioxygenase domain in the interval 235-341 (DAESLTTLSM…RYSIAYFLRA (107 aa)). His-262, Asp-264, and His-319 together coordinate Fe cation. 2-oxoglutarate is bound at residue Arg-332.

Belongs to the iron/ascorbate-dependent oxidoreductase family.

Its pathway is secondary metabolite biosynthesis; terpenoid biosynthesis. Oxidoreductase; part of the gene cluster that mediates the biosynthesis of viridicatumtoxin, a tetracycline-like fungal meroterpenoid with a unique, fused spirobicyclic ring system. The first step of the pathway is the production of the malonamoyl-CoA starter unit for the polyketide synthase vrtA. The aldolase vrtJ may be involved in the synthesis of the malonamate substrate for malonamoyl-CoA synthetase vrtB. The polyketide synthase vrtA then may utilize the malonamoyl-CoA starter unit, followed by sequential condensation of eight malonyl-CoA units to form the polyketide backbone. The cyclization of the last ring could be mediated by the lactamase-like protein vrtG. The proposed post-PKS tailoring steps are a hydroxylation at C5 catalyzed the cytochrome P450 monooxygenase vrtE, a hydroxylation at C12a catalyzed by VrtH and/or VrtI, and an O-methylation by the O-methyltransferase vrtF. VrtC is then proposed to catalyze the transfer of a geranyl group synthesized by vrtD to the aromatic C ring of the tetracyclic polyketide intermediate of viridicatumtoxin to yield previridicatumtoxin. Finally, the cytochrome P450 monooxygenase vrtK catalyzes the spirocyclization of the geranyl moiety of previridicatumtoxin to afford viridicatumtoxin. This Penicillium aethiopicum protein is Oxidoreductase vrtI.